The chain runs to 285 residues: NADPH-dependent 7-cyano-7-deazaguanine reductase (285 aa).

A substrate-binding site is contributed by 91–93; the sequence is IES. 93–94 contacts NADPH; that stretch reads SK. Catalysis depends on cysteine 193, which acts as the Thioimide intermediate. Aspartate 200 (proton donor) is an active-site residue. Position 232–233 (232–233) interacts with substrate; the sequence is HE. Position 261 to 262 (261 to 262) interacts with NADPH; the sequence is RG.

The protein belongs to the GTP cyclohydrolase I family. QueF type 2 subfamily. Homodimer.

It is found in the cytoplasm. The catalysed reaction is 7-aminomethyl-7-carbaguanine + 2 NADP(+) = 7-cyano-7-deazaguanine + 2 NADPH + 3 H(+). It participates in tRNA modification; tRNA-queuosine biosynthesis. Its function is as follows. Catalyzes the NADPH-dependent reduction of 7-cyano-7-deazaguanine (preQ0) to 7-aminomethyl-7-deazaguanine (preQ1). The chain is NADPH-dependent 7-cyano-7-deazaguanine reductase from Shewanella baltica (strain OS223).